The primary structure comprises 346 residues: NADH-ubiquinone oxidoreductase chain 2 (346 aa).

The next 11 membrane-spanning stretches (helical) occupy residues 1–21, 26–46, 60–80, 96–116, 122–142, 151–171, 178–198, 199–219, 242–262, 274–294, and 320–340; these read MSPY…MLIS, WVFM…ILVW, FIVQ…SLSG, MMIM…YWVV, LNYI…LAVL, SSML…GGLG, LLAF…VAGS, LLGL…FSIL, VLLG…GFFG, LLLG…FYYL, and LSGL…LVGG.

This sequence belongs to the complex I subunit 2 family.

It localises to the mitochondrion inner membrane. It carries out the reaction a ubiquinone + NADH + 5 H(+)(in) = a ubiquinol + NAD(+) + 4 H(+)(out). In terms of biological role, core subunit of the mitochondrial membrane respiratory chain NADH dehydrogenase (Complex I) that is believed to belong to the minimal assembly required for catalysis. Complex I functions in the transfer of electrons from NADH to the respiratory chain. The immediate electron acceptor for the enzyme is believed to be ubiquinone. This chain is NADH-ubiquinone oxidoreductase chain 2 (ND2), found in Branchiostoma lanceolatum (Common lancelet).